We begin with the raw amino-acid sequence, 129 residues long: Small ribosomal subunit protein uS11 (129 aa).

The protein belongs to the universal ribosomal protein uS11 family. As to quaternary structure, part of the 30S ribosomal subunit. Interacts with proteins S7 and S18. Binds to IF-3.

Its function is as follows. Located on the platform of the 30S subunit, it bridges several disparate RNA helices of the 16S rRNA. Forms part of the Shine-Dalgarno cleft in the 70S ribosome. The polypeptide is Small ribosomal subunit protein uS11 (Haemophilus ducreyi (strain 35000HP / ATCC 700724)).